The chain runs to 103 residues: Small ribosomal subunit protein bS18c (103 aa).

Belongs to the bacterial ribosomal protein bS18 family. In terms of assembly, part of the 30S ribosomal subunit.

Its subcellular location is the plastid. The protein resides in the chloroplast. This Chlorella vulgaris (Green alga) protein is Small ribosomal subunit protein bS18c (rps18).